Consider the following 113-residue polypeptide: Putative membrane protein insertion efficiency factor (113 aa).

This sequence belongs to the UPF0161 family.

It is found in the cell inner membrane. In terms of biological role, could be involved in insertion of integral membrane proteins into the membrane. In Campylobacter curvus (strain 525.92), this protein is Putative membrane protein insertion efficiency factor.